A 299-amino-acid chain; its full sequence is GTPase Era (299 aa).

In terms of domain architecture, Era-type G spans 4–171; sequence KSGFVAILGR…MEILKENLDE (168 aa). Positions 12 to 19 are G1; it reads GRPNVGKS. 12–19 is a binding site for GTP; the sequence is GRPNVGKS. The G2 stretch occupies residues 38 to 42; sequence QTTRN. A G3 region spans residues 59-62; sequence DTPG. GTP-binding positions include 59–63 and 121–124; these read DTPGI and NKID. Residues 121–124 form a G4 region; sequence NKID. The tract at residues 150–152 is G5; sequence ISA. The KH type-2 domain maps to 202-280; the sequence is TREEIPHSVA…FLETWVKVKK (79 aa).

This sequence belongs to the TRAFAC class TrmE-Era-EngA-EngB-Septin-like GTPase superfamily. Era GTPase family. Monomer.

It is found in the cytoplasm. The protein localises to the cell membrane. Its function is as follows. An essential GTPase that binds both GDP and GTP, with rapid nucleotide exchange. Plays a role in 16S rRNA processing and 30S ribosomal subunit biogenesis and possibly also in cell cycle regulation and energy metabolism. The protein is GTPase Era of Streptococcus suis (strain 98HAH33).